The primary structure comprises 294 residues: Glutamyl-Q tRNA(Asp) synthetase (294 aa).

Residues 8–12 and Glu44 each bind L-glutamate; that span reads RFAPT. The 'HIGH' region signature appears at 11-21; the sequence is PTPSGYLHFGS. The Zn(2+) site is built by Cys100, Cys102, Tyr114, and Cys118. 2 residues coordinate L-glutamate: Tyr171 and Arg189. Residues 227-231 carry the 'KMSKS' region motif; the sequence is KLGKS. Lys230 serves as a coordination point for ATP.

Belongs to the class-I aminoacyl-tRNA synthetase family. GluQ subfamily. Zn(2+) is required as a cofactor.

Its function is as follows. Catalyzes the tRNA-independent activation of glutamate in presence of ATP and the subsequent transfer of glutamate onto a tRNA(Asp). Glutamate is transferred on the 2-amino-5-(4,5-dihydroxy-2-cyclopenten-1-yl) moiety of the queuosine in the wobble position of the QUC anticodon. In Ectopseudomonas mendocina (strain ymp) (Pseudomonas mendocina), this protein is Glutamyl-Q tRNA(Asp) synthetase.